Reading from the N-terminus, the 295-residue chain is Ribosomal RNA small subunit methyltransferase A (295 aa).

S-adenosyl-L-methionine is bound by residues Asn29, Leu31, Gly56, Glu77, Asp102, and Asn128.

This sequence belongs to the class I-like SAM-binding methyltransferase superfamily. rRNA adenine N(6)-methyltransferase family. RsmA subfamily.

It is found in the cytoplasm. The enzyme catalyses adenosine(1518)/adenosine(1519) in 16S rRNA + 4 S-adenosyl-L-methionine = N(6)-dimethyladenosine(1518)/N(6)-dimethyladenosine(1519) in 16S rRNA + 4 S-adenosyl-L-homocysteine + 4 H(+). Functionally, specifically dimethylates two adjacent adenosines (A1518 and A1519) in the loop of a conserved hairpin near the 3'-end of 16S rRNA in the 30S particle. May play a critical role in biogenesis of 30S subunits. The chain is Ribosomal RNA small subunit methyltransferase A from Listeria monocytogenes serotype 4a (strain HCC23).